A 358-amino-acid polypeptide reads, in one-letter code: Isopentenyl-diphosphate delta-isomerase (358 aa).

12 to 13 (RK) contributes to the substrate binding site. FMN contacts are provided by residues 69-71 (AMT), serine 99, and asparagine 128. Glutamine 158 lines the substrate pocket. Glutamate 159 lines the Mg(2+) pocket. FMN-binding positions include lysine 190, threonine 220, 267–269 (GIR), and 288–289 (AG).

It belongs to the IPP isomerase type 2 family. As to quaternary structure, homooctamer. Dimer of tetramers. Requires FMN as cofactor. It depends on NADPH as a cofactor. Mg(2+) is required as a cofactor.

Its subcellular location is the cytoplasm. The enzyme catalyses isopentenyl diphosphate = dimethylallyl diphosphate. Its function is as follows. Involved in the biosynthesis of isoprenoids. Catalyzes the 1,3-allylic rearrangement of the homoallylic substrate isopentenyl (IPP) to its allylic isomer, dimethylallyl diphosphate (DMAPP). This is Isopentenyl-diphosphate delta-isomerase from Listeria monocytogenes serotype 4b (strain F2365).